The primary structure comprises 262 residues: Nodulation protein J (262 aa).

The 227-residue stretch at 33-259 (ASILGNLAEP…FLSVGLLQRR (227 aa)) folds into the ABC transmembrane type-2 domain. Helical transmembrane passes span 35–55 (ILGNLAEPVTSLFGLGFGLGA), 62–82 (GIPYVAFLAAGMVATSAMISA), 125–145 (ALLAGTAMMLVAATMGFASWP), 147–167 (VLFALPVIALTGFAFASLAMI), 177–197 (YFIFYQTLFLTPMLFLSGAVF), and 236–256 (LHISALCIFAVMPFFLSVGLL).

This sequence belongs to the ABC-2 integral membrane protein family. Lipooligosaccharide exporter (TC 3.A.1.102) subfamily. In terms of assembly, the complex is composed of two ATP-binding proteins (NodI) and two transmembrane proteins (NodJ).

It is found in the cell inner membrane. Functionally, part of the ABC transporter complex NodIJ involved in the export of the nodulation factors (Nod factors), the bacterial signal molecules that induce symbiosis and subsequent nodulation induction. Nod factors are LCO (lipo-chitin oligosaccharide), a modified beta-1,4-linked N-acetylglucosamine oligosaccharide. This subunit encodes the transporter. The polypeptide is Nodulation protein J (nodJ) (Sinorhizobium fredii (strain NBRC 101917 / NGR234)).